The chain runs to 86 residues: uncharacterized protein (86 aa).

The tract at residues 1-21 (MLSNSTSRNRHSKHNKKNTRE) is disordered. Residues 8-17 (RNRHSKHNKK) show a composition bias toward basic residues.

This is an uncharacterized protein from Acidianus convivator (ATV).